A 768-amino-acid polypeptide reads, in one-letter code: ATP-dependent RNA helicase DBP4 (768 aa).

The Q motif motif lies at 41–69 (VFFKDLPISNSTLKGLNDSAFLKLTDIQR). The Helicase ATP-binding domain occupies 72–246 (IPMSLKGYDI…RLSLTDYKTI (175 aa)). 85-92 (AKTGSGKT) provides a ligand contact to ATP. The short motif at 194-197 (DEAD) is the DEAD box element. Residues 280–439 (KLDMLYSFIK…SIKPQLQSLL (160 aa)) form the Helicase C-terminal domain. Disordered stretches follow at residues 581 to 612 (EEEL…KGNA) and 653 to 754 (KDVM…EPQT). Basic and acidic residues predominate over residues 653 to 666 (KDVMNEVDVEDKQV). Over residues 667–678 (AKQKKQEKKRKR) the composition is skewed to basic residues. Over residues 711–721 (DMQDPDSDDEE) the composition is skewed to acidic residues.

It belongs to the DEAD box helicase family. DDX10/DBP4 subfamily. Interacts with the U3 and U14 snoRNAs. Associates with pre-ribosomal complexes.

It localises to the nucleus. It is found in the nucleolus. It catalyses the reaction ATP + H2O = ADP + phosphate + H(+). Its function is as follows. ATP-dependent RNA helicase required for ribosome biogenesis. Involved in the release of U14 snoRNA in pre-ribosomal complexes. Required for pre-rRNA cleavage at site A2. The chain is ATP-dependent RNA helicase DBP4 (DBP4) from Vanderwaltozyma polyspora (strain ATCC 22028 / DSM 70294 / BCRC 21397 / CBS 2163 / NBRC 10782 / NRRL Y-8283 / UCD 57-17) (Kluyveromyces polysporus).